A 275-amino-acid polypeptide reads, in one-letter code: Large ribosomal subunit protein uL2 (275 aa).

Disordered stretches follow at residues 28 to 49 (APHA…HGRI) and 224 to 246 (AMNP…NPHP).

The protein belongs to the universal ribosomal protein uL2 family. As to quaternary structure, part of the 50S ribosomal subunit. Forms a bridge to the 30S subunit in the 70S ribosome.

Its function is as follows. One of the primary rRNA binding proteins. Required for association of the 30S and 50S subunits to form the 70S ribosome, for tRNA binding and peptide bond formation. It has been suggested to have peptidyltransferase activity; this is somewhat controversial. Makes several contacts with the 16S rRNA in the 70S ribosome. This chain is Large ribosomal subunit protein uL2, found in Stenotrophomonas maltophilia (strain R551-3).